We begin with the raw amino-acid sequence, 51 residues long: Large ribosomal subunit protein eL39 (51 aa).

This sequence belongs to the eukaryotic ribosomal protein eL39 family.

The protein is Large ribosomal subunit protein eL39 of Saccharolobus islandicus (strain Y.N.15.51 / Yellowstone #2) (Sulfolobus islandicus).